The following is an 89-amino-acid chain: Small ribosomal subunit protein uS15 (89 aa).

Belongs to the universal ribosomal protein uS15 family. As to quaternary structure, part of the 30S ribosomal subunit. Forms a bridge to the 50S subunit in the 70S ribosome, contacting the 23S rRNA.

In terms of biological role, one of the primary rRNA binding proteins, it binds directly to 16S rRNA where it helps nucleate assembly of the platform of the 30S subunit by binding and bridging several RNA helices of the 16S rRNA. Its function is as follows. Forms an intersubunit bridge (bridge B4) with the 23S rRNA of the 50S subunit in the ribosome. The polypeptide is Small ribosomal subunit protein uS15 (Syntrophobacter fumaroxidans (strain DSM 10017 / MPOB)).